Reading from the N-terminus, the 168-residue chain is Lipoprotein signal peptidase (168 aa).

The next 3 membrane-spanning stretches (helical) occupy residues 12–32, 67–87, and 93–113; these read WYWVVVVVFLADQLSKQWVLA, WQRWLFTAVAVGFSVLLTIWL, and NMVRLNLAYTLVIGGALGNLI. Active-site residues include D123 and D141. Residues 136–156 form a helical membrane-spanning segment; the sequence is AFNIADAAIFIGAVLIIIDSF.

It belongs to the peptidase A8 family.

It localises to the cell inner membrane. The enzyme catalyses Release of signal peptides from bacterial membrane prolipoproteins. Hydrolyzes -Xaa-Yaa-Zaa-|-(S,diacylglyceryl)Cys-, in which Xaa is hydrophobic (preferably Leu), and Yaa (Ala or Ser) and Zaa (Gly or Ala) have small, neutral side chains.. It participates in protein modification; lipoprotein biosynthesis (signal peptide cleavage). In terms of biological role, this protein specifically catalyzes the removal of signal peptides from prolipoproteins. The chain is Lipoprotein signal peptidase from Shewanella amazonensis (strain ATCC BAA-1098 / SB2B).